The following is a 592-amino-acid chain: 3-hydroxy-3-methylglutaryl-coenzyme A reductase 1 (592 aa).

Residues 1-45 form a disordered region; that stretch reads MDLRRRPPKPPVTNNNNSNGSFRSYQPRTSDDDHRRRATTIAPPP. A compositionally biased stretch (polar residues) spans 12 to 28; the sequence is VTNNNNSNGSFRSYQPR. N-linked (GlcNAc...) asparagine glycans are attached at residues N16 and N19. Helical transmembrane passes span 47–69 and 97–117; these read ASDALPLPLYLTNAVFFTLFFSV and AIIALIASFIYLLGFFGIDFV. Residues 118–171 form a linker region; that stretch reads QSFISRASGDAWDLADTIDDDDHRLVTCSPPTPIVSVAKLPNPEPIVTESLPEE. The tract at residues 172–592 is catalytic; that stretch reads DEEIVKSVID…GATTTTTTTT (421 aa). The active-site Charge relay system is the E265. An N-linked (GlcNAc...) asparagine glycan is attached at N329. Active-site charge relay system residues include K397 and D473. The active-site Proton donor is H571. A glycan (N-linked (GlcNAc...) asparagine) is linked at N575. At S577 the chain carries Phosphoserine.

Belongs to the HMG-CoA reductase family. In terms of assembly, interacts (via N-terminus) with B''ALPHA and B''BETA. Inactivated by phosphorylation at Ser-577 by KIN10 activated form. Probably also phosphorylated at additional sites. As to expression, found in all tissues. Isoform Short is expressed at low levels specifically in flowers. Expressed in both the tapetum and microspores.

Its subcellular location is the endoplasmic reticulum membrane. The enzyme catalyses (R)-mevalonate + 2 NADP(+) + CoA = (3S)-3-hydroxy-3-methylglutaryl-CoA + 2 NADPH + 2 H(+). Its pathway is metabolic intermediate biosynthesis; (R)-mevalonate biosynthesis; (R)-mevalonate from acetyl-CoA: step 3/3. Regulated at the post-translational level in response to alterations of sphingolipid and sterol biosynthetic pathways. Negatively regulated by a PP2A-dependent dephosphorylation occurring at a site different than Ser-577. Completely inhibited by mevinolin (IC(50) = 12.5 nM). Reversibly inactivated by phosphorylation at Ser-577 by spinach or Brassica oleracea HMGR kinases in a cell-free system. Down-regulated by KIN10 through its phosphorylation at Ser-577. Its function is as follows. Catalyzes the synthesis of mevalonate, the specific precursor of all isoprenoid compounds present in plants. In Arabidopsis thaliana (Mouse-ear cress), this protein is 3-hydroxy-3-methylglutaryl-coenzyme A reductase 1.